A 303-amino-acid polypeptide reads, in one-letter code: N-acetyl-D-glucosamine kinase (303 aa).

ATP-binding positions include 4–11 and 133–140; these read GFDIGGTK and GVGGGLVL. Residues H157, C177, C179, and C184 each coordinate Zn(2+).

It belongs to the ROK (NagC/XylR) family. NagK subfamily.

It carries out the reaction N-acetyl-D-glucosamine + ATP = N-acetyl-D-glucosamine 6-phosphate + ADP + H(+). The protein operates within cell wall biogenesis; peptidoglycan recycling. Functionally, catalyzes the phosphorylation of N-acetyl-D-glucosamine (GlcNAc) derived from cell-wall degradation, yielding GlcNAc-6-P. The chain is N-acetyl-D-glucosamine kinase from Citrobacter koseri (strain ATCC BAA-895 / CDC 4225-83 / SGSC4696).